The chain runs to 209 residues: A-type ATP synthase subunit D (209 aa).

This sequence belongs to the V-ATPase D subunit family. In terms of assembly, has multiple subunits with at least A(3), B(3), C, D, E, F, H, I and proteolipid K(x).

The protein localises to the cell membrane. Its function is as follows. Component of the A-type ATP synthase that produces ATP from ADP in the presence of a proton gradient across the membrane. This Methanosarcina acetivorans (strain ATCC 35395 / DSM 2834 / JCM 12185 / C2A) protein is A-type ATP synthase subunit D.